Here is a 214-residue protein sequence, read N- to C-terminus: ER lumen protein-retaining receptor 3 (214 aa).

At 1 to 4 (MNVF) the chain is on the lumenal side. A helical transmembrane segment spans residues 5–24 (RISGDVSHLLAIIILLLKMW). The Cytoplasmic segment spans residues 25–32 (KSKSCAGI). The helical transmembrane segment at 33–52 (SGKSQLLFALVFTTRYLDLF) threads the bilayer. Positions 47–48 (RY) are interaction with the K-D-E-L motif on target proteins. At 53-58 (TVFISA) the chain is on the lumenal side. A helical membrane pass occupies residues 59-79 (YNTVMKIVFLVCAYVTVYLIY). The Cytoplasmic portion of the chain corresponds to 80 to 92 (GKFRKAYDSENDT). The helical transmembrane segment at 93–110 (FRLEFLLVPVIGLSFLEN) threads the bilayer. The Lumenal portion of the chain corresponds to 111–116 (YEFTPL). The chain crosses the membrane as a helical span at residues 117–135 (EILWTFSIYLESVAILPQL). Over 136-149 (FMISKTGEAESITT) the chain is Cytoplasmic. A helical membrane pass occupies residues 150-168 (HYLFFLGLYRVLYLANWIW). The tract at residues 159–169 (RVLYLANWIWR) is interaction with the K-D-E-L motif on target proteins. Over 169 to 178 (RYHTEKFYDQ) the chain is Lumenal. A helical membrane pass occupies residues 179-199 (IAVVSGVVQTIFYFDFFYLYI). The Cytoplasmic portion of the chain corresponds to 200–214 (TKVLKGKKLSLPMPV). The interval 204–207 (KGKK) is important for recycling of cargo proteins with the sequence motif K-D-E-L from the Golgi to the endoplasmic reticulum.

Belongs to the ERD2 family.

The protein localises to the endoplasmic reticulum membrane. It is found in the golgi apparatus membrane. The protein resides in the cytoplasmic vesicle. It localises to the COPI-coated vesicle membrane. Receptor for the C-terminal sequence motif K-D-E-L that is present on endoplasmic reticulum resident proteins and that mediates their recycling from the Golgi back to the endoplasmic reticulum. The chain is ER lumen protein-retaining receptor 3 (kdelr3) from Xenopus tropicalis (Western clawed frog).